The sequence spans 198 residues: Protein GrpE (198 aa).

The segment at 1 to 58 (MTEKDQSVNNEEFAEKEDNTAKDSNTDEQIEKTASEDDVQNDSSAVDDKEKEIQQLKE) is disordered. 2 stretches are compositionally biased toward basic and acidic residues: residues 16-35 (KEDN…KTAS) and 46-58 (VDDK…QLKE).

Belongs to the GrpE family. In terms of assembly, homodimer.

The protein resides in the cytoplasm. Participates actively in the response to hyperosmotic and heat shock by preventing the aggregation of stress-denatured proteins, in association with DnaK and GrpE. It is the nucleotide exchange factor for DnaK and may function as a thermosensor. Unfolded proteins bind initially to DnaJ; upon interaction with the DnaJ-bound protein, DnaK hydrolyzes its bound ATP, resulting in the formation of a stable complex. GrpE releases ADP from DnaK; ATP binding to DnaK triggers the release of the substrate protein, thus completing the reaction cycle. Several rounds of ATP-dependent interactions between DnaJ, DnaK and GrpE are required for fully efficient folding. This is Protein GrpE from Staphylococcus carnosus (strain TM300).